The chain runs to 277 residues: 2,3,4,5-tetrahydropyridine-2,6-dicarboxylate N-succinyltransferase (277 aa).

R106 and D143 together coordinate substrate.

The protein belongs to the transferase hexapeptide repeat family. As to quaternary structure, homotrimer.

The protein localises to the cytoplasm. It carries out the reaction (S)-2,3,4,5-tetrahydrodipicolinate + succinyl-CoA + H2O = (S)-2-succinylamino-6-oxoheptanedioate + CoA. It participates in amino-acid biosynthesis; L-lysine biosynthesis via DAP pathway; LL-2,6-diaminopimelate from (S)-tetrahydrodipicolinate (succinylase route): step 1/3. The protein is 2,3,4,5-tetrahydropyridine-2,6-dicarboxylate N-succinyltransferase of Xylella fastidiosa (strain 9a5c).